The chain runs to 75 residues: Putative sulfur carrier protein TsuB (75 aa).

Catalysis depends on Cys-13, which acts as the Cysteine persulfide intermediate.

The protein belongs to the sulfur carrier protein TusA family.

Its function is as follows. Involved in thiosulfate metabolism. The chain is Putative sulfur carrier protein TsuB from Escherichia coli (strain K12).